A 221-amino-acid polypeptide reads, in one-letter code: 7-cyano-7-deazaguanine synthase (221 aa).

10 to 20 contacts ATP; sequence LSGGLDSTTCM. Zn(2+)-binding residues include cysteine 188, cysteine 196, cysteine 199, and cysteine 202.

It belongs to the QueC family. As to quaternary structure, homodimer. Zn(2+) is required as a cofactor.

The catalysed reaction is 7-carboxy-7-deazaguanine + NH4(+) + ATP = 7-cyano-7-deazaguanine + ADP + phosphate + H2O + H(+). It participates in purine metabolism; 7-cyano-7-deazaguanine biosynthesis. In terms of biological role, catalyzes the ATP-dependent conversion of 7-carboxy-7-deazaguanine (CDG) to 7-cyano-7-deazaguanine (preQ(0)). The chain is 7-cyano-7-deazaguanine synthase from Oceanobacillus iheyensis (strain DSM 14371 / CIP 107618 / JCM 11309 / KCTC 3954 / HTE831).